A 429-amino-acid chain; its full sequence is D-amino acid dehydrogenase (429 aa).

Position 3–17 (3–17) interacts with FAD; the sequence is VLILGSGVIGVTSAW.

Belongs to the DadA oxidoreductase family. Requires FAD as cofactor.

The enzyme catalyses a D-alpha-amino acid + A + H2O = a 2-oxocarboxylate + AH2 + NH4(+). It functions in the pathway amino-acid degradation; D-alanine degradation; NH(3) and pyruvate from D-alanine: step 1/1. Its function is as follows. Oxidative deamination of D-amino acids. The sequence is that of D-amino acid dehydrogenase from Xanthomonas euvesicatoria pv. vesicatoria (strain 85-10) (Xanthomonas campestris pv. vesicatoria).